The chain runs to 526 residues: Peptide chain release factor 3 (526 aa).

The tr-type G domain occupies 8–277; the sequence is NKRRTFAIIS…GLTEWAPKPQ (270 aa). Residues 17 to 24, 85 to 89, and 139 to 142 contribute to the GTP site; these read SHPDAGKT, DTPGH, and NKLD.

Belongs to the TRAFAC class translation factor GTPase superfamily. Classic translation factor GTPase family. PrfC subfamily.

The protein localises to the cytoplasm. Functionally, increases the formation of ribosomal termination complexes and stimulates activities of RF-1 and RF-2. It binds guanine nucleotides and has strong preference for UGA stop codons. It may interact directly with the ribosome. The stimulation of RF-1 and RF-2 is significantly reduced by GTP and GDP, but not by GMP. The protein is Peptide chain release factor 3 of Actinobacillus pleuropneumoniae serotype 7 (strain AP76).